Consider the following 96-residue polypeptide: Protein RnfH (96 aa).

It belongs to the UPF0125 (RnfH) family.

This Escherichia coli O17:K52:H18 (strain UMN026 / ExPEC) protein is Protein RnfH.